The sequence spans 953 residues: uncharacterized protein (953 aa).

Transmembrane regions (helical) follow at residues 23-43, 103-123, 148-168, 392-412, 435-455, 481-501, 540-560, 575-595, 599-619, 642-662, and 666-686; these read VVTS…AFLI, YLFI…PILL, GRYF…LYII, VSAI…VGMI, LLGL…MSFL, AYFA…SAAT, ISSG…LGAF, LSSM…VITF, IISP…YIAY, LFQT…LFAV, and WGPI…HLHL. The interval 910–953 is disordered; sequence VPPPYNDVKDEANGEANGEFDTASKENNPFADPKYKEEESRSAV. The span at 942–953 shows a compositional bias: basic and acidic residues; sequence PKYKEEESRSAV. Ser949 carries the phosphoserine modification.

It belongs to the CSC1 (TC 1.A.17) family.

Its subcellular location is the membrane. Functionally, acts as an osmosensitive calcium-permeable cation channel. This is an uncharacterized protein from Saccharomyces cerevisiae (strain ATCC 204508 / S288c) (Baker's yeast).